The primary structure comprises 298 residues: uncharacterized protein (298 aa).

10 consecutive transmembrane segments (helical) span residues 9–28 (GYVL…LYFK), 38–60 (IIVQ…WKHP), 72–94 (RFVV…VWAV), 104–121 (LGYY…MLLL), 128–145 (LQWL…QQVW), 150–167 (LPWV…YGLI), 174–196 (AALP…WLLF), 211–233 (PEAL…FNAA), 240–262 (ATLG…LLFG), and 272–291 (AFAF…WRSL). Residues 18-141 (VIWGLFPLYF…AVALASLGVA (124 aa)) form the EamA domain.

This sequence belongs to the EamA transporter family.

The protein localises to the cell membrane. This is an uncharacterized protein from Pseudomonas aeruginosa (strain ATCC 15692 / DSM 22644 / CIP 104116 / JCM 14847 / LMG 12228 / 1C / PRS 101 / PAO1).